Reading from the N-terminus, the 360-residue chain is Peptide chain release factor 1 (360 aa).

An N5-methylglutamine modification is found at Gln-235. Over residues 291-308 (ASERRNLLGTGDRSDRNR) the composition is skewed to basic and acidic residues. The segment at 291–312 (ASERRNLLGTGDRSDRNRTYNF) is disordered.

This sequence belongs to the prokaryotic/mitochondrial release factor family. In terms of processing, methylated by PrmC. Methylation increases the termination efficiency of RF1.

The protein resides in the cytoplasm. In terms of biological role, peptide chain release factor 1 directs the termination of translation in response to the peptide chain termination codons UAG and UAA. The sequence is that of Peptide chain release factor 1 from Yersinia pseudotuberculosis serotype I (strain IP32953).